Consider the following 133-residue polypeptide: Small ribosomal subunit protein uS8 (133 aa).

The protein belongs to the universal ribosomal protein uS8 family. Part of the 30S ribosomal subunit.

Its function is as follows. One of the primary rRNA binding proteins, it binds directly to 16S rRNA central domain where it helps coordinate assembly of the platform of the 30S subunit. The sequence is that of Small ribosomal subunit protein uS8 from Ignicoccus hospitalis (strain KIN4/I / DSM 18386 / JCM 14125).